We begin with the raw amino-acid sequence, 624 residues long: Fibronectin type III domain-containing protein 2 (624 aa).

Positions 1–19 (MREQFSVLVISLLFSSSYG) are cleaved as a signal peptide. 5 Fibronectin type-III domains span residues 131–236 (PPQN…TPDI), 240–330 (EPTN…TDVF), 334–430 (MPRF…TVPT), 431–524 (VPRE…PKRD), and 527–624 (VPPN…WPGR).

In terms of tissue distribution, prismatic layer of shell (at protein level).

The protein resides in the secreted. The polypeptide is Fibronectin type III domain-containing protein 2 (Margaritifera margaritifera (Freshwater pearl mussel)).